The following is a 266-amino-acid chain: PTS system mannose-specific EIIC component (266 aa).

Met-1 is subject to N-formylmethionine. Residues Met-1–Thr-4 lie on the Periplasmic side of the membrane. In terms of domain architecture, PTS EIIC type-4 spans Met-1–Leu-237. Residues Thr-5–Leu-43 lie within the membrane without spanning it. At Gly-44–Met-46 the chain is on the periplasmic side. The stretch at Lys-47–Ile-86 is an intramembrane region. Residues Ala-87–Gln-90 are Periplasmic-facing. Over Ser-91 to Ala-124 the chain traverses the membrane. Over Asp-125–Asn-132 the chain is Cytoplasmic. The segment at Leu-133 to Leu-160 is a transmembrane helix. Over Ser-161–Glu-176 the chain is Periplasmic. The chain crosses the lipid bilayer at residues Val-177–Met-200. The Cytoplasmic segment spans residues Met-201 to Met-207. The chain crosses the lipid bilayer at residues Pro-208–Ala-218. Over Phe-219 to Leu-224 the chain is Periplasmic. The segment at Val-225 to Ser-242 is a transmembrane helix. Residues Pro-243–Asp-266 are Cytoplasmic-facing.

As to quaternary structure, homotrimer of protomers that are composed of two subunits, IIC and IID.

It is found in the cell inner membrane. In terms of biological role, the phosphoenolpyruvate-dependent sugar phosphotransferase system (sugar PTS), a major carbohydrate active transport system, catalyzes the phosphorylation of incoming sugar substrates concomitantly with their translocation across the cell membrane. The enzyme II ManXYZ PTS system is involved in mannose transport. The chain is PTS system mannose-specific EIIC component (manY) from Escherichia coli O157:H7.